The chain runs to 244 residues: Protein crossbronx (244 aa).

One can recognise a UBC core domain in the interval 20-176 (QQEYKILAEY…VQENIKESKE (157 aa)). The segment at 209 to 244 (AGRSKQTEPSAQQGNGGHATGLSWVKEGEFKPLSIE) is disordered.

This sequence belongs to the ubiquitin-conjugating enzyme family. FTS subfamily.

The polypeptide is Protein crossbronx (cbx) (Drosophila simulans (Fruit fly)).